The following is a 489-amino-acid chain: Toxin coregulated pilus biosynthesis outer membrane protein C (489 aa).

An N-terminal signal peptide occupies residues 1-16 (MKKTIISTLVIGLVSG). Cys17 carries the N-palmitoyl cysteine lipid modification. Residue Cys17 is the site of S-diacylglycerol cysteine attachment. 4 helical membrane-spanning segments follow: residues 174 to 190 (FSSS…SSGL), 294 to 308 (AISL…GASY), 402 to 417 (QLVS…LPTV), and 442 to 457 (NYIQ…GGGT).

It localises to the cell membrane. Involved in TCP pilus biogenesis. In Vibrio cholerae serotype O1 (strain ATCC 39315 / El Tor Inaba N16961), this protein is Toxin coregulated pilus biosynthesis outer membrane protein C (tcpC).